A 307-amino-acid polypeptide reads, in one-letter code: Small ribosomal subunit biogenesis GTPase RsgA (307 aa).

The CP-type G domain maps to 78–240 (HKTAFGHLIA…VIDTPGIKEL (163 aa)). Residues 128 to 131 (NKSD) and 182 to 190 (GHSGVGKST) contribute to the GTP site. Positions 264, 269, 271, and 277 each coordinate Zn(2+).

Belongs to the TRAFAC class YlqF/YawG GTPase family. RsgA subfamily. In terms of assembly, monomer. Associates with 30S ribosomal subunit, binds 16S rRNA. Requires Zn(2+) as cofactor.

The protein resides in the cytoplasm. Its function is as follows. One of several proteins that assist in the late maturation steps of the functional core of the 30S ribosomal subunit. Helps release RbfA from mature subunits. May play a role in the assembly of ribosomal proteins into the subunit. Circularly permuted GTPase that catalyzes slow GTP hydrolysis, GTPase activity is stimulated by the 30S ribosomal subunit. This chain is Small ribosomal subunit biogenesis GTPase RsgA, found in Cytophaga hutchinsonii (strain ATCC 33406 / DSM 1761 / CIP 103989 / NBRC 15051 / NCIMB 9469 / D465).